The sequence spans 1420 residues: DNA-directed RNA polymerase subunit beta' (1420 aa).

The Zn(2+) site is built by cysteine 72, cysteine 74, cysteine 87, and cysteine 90. The Mg(2+) site is built by aspartate 462, aspartate 464, and aspartate 466. Positions 816, 896, 903, and 906 each coordinate Zn(2+).

The protein belongs to the RNA polymerase beta' chain family. The RNAP catalytic core consists of 2 alpha, 1 beta, 1 beta' and 1 omega subunit. When a sigma factor is associated with the core the holoenzyme is formed, which can initiate transcription. Requires Mg(2+) as cofactor. It depends on Zn(2+) as a cofactor.

The catalysed reaction is RNA(n) + a ribonucleoside 5'-triphosphate = RNA(n+1) + diphosphate. In terms of biological role, DNA-dependent RNA polymerase catalyzes the transcription of DNA into RNA using the four ribonucleoside triphosphates as substrates. The polypeptide is DNA-directed RNA polymerase subunit beta' (Blochmanniella floridana).